The chain runs to 765 residues: Protein transport protein Sec23A (765 aa).

The Zn(2+) site is built by cysteine 61, cysteine 66, cysteine 85, and cysteine 88. One copy of the Gelsolin-like repeat lies at 632-718 (PEPVLLDSSS…EHGGSQARFL (87 aa)).

This sequence belongs to the SEC23/SEC24 family. SEC23 subfamily. As to quaternary structure, COPII is composed of at least five proteins: the Sec23/24 complex, the Sec13/31 complex and Sar1.

The protein resides in the cytoplasmic vesicle. Its subcellular location is the COPII-coated vesicle membrane. It localises to the endoplasmic reticulum membrane. It is found in the cytoplasm. The protein localises to the cytosol. In terms of biological role, component of the coat protein complex II (COPII) which promotes the formation of transport vesicles from the endoplasmic reticulum (ER). The coat has two main functions, the physical deformation of the endoplasmic reticulum membrane into vesicles and the selection of cargo molecules for their transport to the Golgi complex. The chain is Protein transport protein Sec23A from Xenopus tropicalis (Western clawed frog).